The sequence spans 202 residues: Histone chaperone ASF1B (202 aa).

Residues 1 to 155 (MAKVSVLNVA…VTRFHINWDN (155 aa)) form an interaction with CHAF1B region. The segment at 1 to 156 (MAKVSVLNVA…TRFHINWDNN (156 aa)) is interaction with histone H3. Phosphoserine; by TLK2 is present on Ser198.

This sequence belongs to the ASF1 family. As to quaternary structure, interacts with histone H3 (via C-terminus), including histone H3.1, H3.2 and H3.3, and histone H4; the interaction with H3 is direct. Interacts with the CHAF1A, CHAF1B and RBBP4 subunits of the CAF-1 complex. Interacts with HAT1, NASP and TAF1. Found in a soluble complex with NASP and histones H3 and H4; the interaction with NASP is probably indirect and mediated by H3-H4. Interacts with CDAN1. Found in a cytosolic complex with IPO4 and histones H3 and H4. Interacts with CREBBP. In terms of processing, phosphorylated by TLK1 and TLK2. As to expression, highly expressed in testis and at lower levels in colon, small intestine and thymus.

It localises to the nucleus. The protein localises to the cytoplasm. Its subcellular location is the cytosol. Its function is as follows. Histone chaperone that facilitates histone deposition and histone exchange and removal during nucleosome assembly and disassembly. Cooperates with chromatin assembly factor 1 (CAF-1) to promote replication-dependent chromatin assembly. Also involved in the nuclear import of the histone H3-H4 dimer together with importin-4 (IPO4): specifically recognizes and binds newly synthesized histones with the monomethylation of H3 'Lys-9' (H3K9me1) and diacetylation at 'Lys-5' and 'Lys-12' of H4 (H4K5K12ac) marks in the cytosol. Does not participate in replication-independent nucleosome deposition which is mediated by ASF1A and HIRA. Required for gonad development. In Homo sapiens (Human), this protein is Histone chaperone ASF1B.